Reading from the N-terminus, the 118-residue chain is UPF0295 protein BCG9842_B4782 (118 aa).

2 helical membrane passes run I12 to F32 and F43 to M63.

The protein belongs to the UPF0295 family.

The protein localises to the cell membrane. This Bacillus cereus (strain G9842) protein is UPF0295 protein BCG9842_B4782.